A 477-amino-acid polypeptide reads, in one-letter code: UDP-N-acetylmuramoylalanine--D-glutamate ligase (477 aa).

125 to 131 lines the ATP pocket; the sequence is GTNGKST.

Belongs to the MurCDEF family.

Its subcellular location is the cytoplasm. It catalyses the reaction UDP-N-acetyl-alpha-D-muramoyl-L-alanine + D-glutamate + ATP = UDP-N-acetyl-alpha-D-muramoyl-L-alanyl-D-glutamate + ADP + phosphate + H(+). It participates in cell wall biogenesis; peptidoglycan biosynthesis. Functionally, cell wall formation. Catalyzes the addition of glutamate to the nucleotide precursor UDP-N-acetylmuramoyl-L-alanine (UMA). This chain is UDP-N-acetylmuramoylalanine--D-glutamate ligase, found in Rhodospirillum rubrum (strain ATCC 11170 / ATH 1.1.1 / DSM 467 / LMG 4362 / NCIMB 8255 / S1).